A 798-amino-acid polypeptide reads, in one-letter code: Glycogen phosphorylase (798 aa).

Lys-646 carries the N6-(pyridoxal phosphate)lysine modification.

It belongs to the glycogen phosphorylase family. Requires pyridoxal 5'-phosphate as cofactor.

It carries out the reaction [(1-&gt;4)-alpha-D-glucosyl](n) + phosphate = [(1-&gt;4)-alpha-D-glucosyl](n-1) + alpha-D-glucose 1-phosphate. Its function is as follows. Phosphorylase is an important allosteric enzyme in carbohydrate metabolism. Enzymes from different sources differ in their regulatory mechanisms and in their natural substrates. However, all known phosphorylases share catalytic and structural properties. The protein is Glycogen phosphorylase (glgP) of Bacillus subtilis (strain 168).